Reading from the N-terminus, the 197-residue chain is uncharacterized protein (197 aa).

This is an uncharacterized protein from Orgyia pseudotsugata multicapsid polyhedrosis virus (OpMNPV).